Reading from the N-terminus, the 327-residue chain is MDSWVVLLGLQIIWLPLLTHGTAPTPTLRFVAVGDWGGVPNAPFHTAREMANAKEIARTVQTMGADFIMSLGDNFYFTGVHDASDKRFQETFEDVFSDRALRNIPWYVLAGNHDHLGNVSAQIAYSKISKRWNFPSPYYRLRFKIPRTNITVAIFMLDTVMLCGNSDDFASQQPKMPRDLGVARTQLSWLKKQLAAAKEDYVLVAGHYPIWSIAEHGPTRCLVKNLRPLLATYGVTAYLCGHDHNLQYLQDENGVGYVLSGAGNFMDPSVRHQRKVPNGYLRFHYGSEDSLGGFTHVEISPKEMTIIYVEASGKSLFKTSLPRRPRP.

A signal peptide spans 1-22; the sequence is MDSWVVLLGLQIIWLPLLTHGT. Positions 35, 73, 76, and 112 each coordinate Fe cation. N-linked (GlcNAc...) asparagine glycans are attached at residues Asn-118 and Asn-149. An intrachain disulfide couples Cys-163 to Cys-221. 3 residues coordinate Fe cation: His-207, His-242, and His-244.

In terms of assembly, exists either as monomer or, after proteolytic processing, as a dimer of two chains linked by disulfide bond(s). Requires Fe cation as cofactor. As to expression, characteristic constituent of osteoclasts.

The protein localises to the lysosome. The enzyme catalyses a phosphate monoester + H2O = an alcohol + phosphate. In terms of biological role, may play a role in the process of bone resorption. The osteoclastic trap acts on nucleotide tri- and diphosphates with higher affinity, compared with other substrates. In Mus musculus (Mouse), this protein is Tartrate-resistant acid phosphatase type 5 (Acp5).